The following is a 314-amino-acid chain: tRNA dimethylallyltransferase (314 aa).

The tract at residues 1–25 (MAEEPQRSPAPTSPFAFTVPSNSLS) is disordered. 40–47 (GPTASGKS) is a binding site for ATP. 42 to 47 (TASGKS) provides a ligand contact to substrate.

The protein belongs to the IPP transferase family. As to quaternary structure, monomer. Mg(2+) is required as a cofactor.

The catalysed reaction is adenosine(37) in tRNA + dimethylallyl diphosphate = N(6)-dimethylallyladenosine(37) in tRNA + diphosphate. Functionally, catalyzes the transfer of a dimethylallyl group onto the adenine at position 37 in tRNAs that read codons beginning with uridine, leading to the formation of N6-(dimethylallyl)adenosine (i(6)A). The protein is tRNA dimethylallyltransferase of Cereibacter sphaeroides (strain ATCC 17023 / DSM 158 / JCM 6121 / CCUG 31486 / LMG 2827 / NBRC 12203 / NCIMB 8253 / ATH 2.4.1.) (Rhodobacter sphaeroides).